Reading from the N-terminus, the 132-residue chain is Small ribosomal subunit protein uS8 (132 aa).

It belongs to the universal ribosomal protein uS8 family. Part of the 30S ribosomal subunit. Contacts proteins S5 and S12.

Its function is as follows. One of the primary rRNA binding proteins, it binds directly to 16S rRNA central domain where it helps coordinate assembly of the platform of the 30S subunit. The chain is Small ribosomal subunit protein uS8 from Mycobacterium leprae (strain Br4923).